A 145-amino-acid polypeptide reads, in one-letter code: 3-hydroxyacyl-[acyl-carrier-protein] dehydratase FabZ (145 aa).

The active site involves His47.

Belongs to the thioester dehydratase family. FabZ subfamily.

The protein resides in the cytoplasm. It carries out the reaction a (3R)-hydroxyacyl-[ACP] = a (2E)-enoyl-[ACP] + H2O. Its function is as follows. Involved in unsaturated fatty acids biosynthesis. Catalyzes the dehydration of short chain beta-hydroxyacyl-ACPs and long chain saturated and unsaturated beta-hydroxyacyl-ACPs. The polypeptide is 3-hydroxyacyl-[acyl-carrier-protein] dehydratase FabZ (Acidovorax sp. (strain JS42)).